Reading from the N-terminus, the 172-residue chain is Adenine phosphoribosyltransferase (172 aa).

It belongs to the purine/pyrimidine phosphoribosyltransferase family. As to quaternary structure, homodimer.

It localises to the cytoplasm. The enzyme catalyses AMP + diphosphate = 5-phospho-alpha-D-ribose 1-diphosphate + adenine. It participates in purine metabolism; AMP biosynthesis via salvage pathway; AMP from adenine: step 1/1. Functionally, catalyzes a salvage reaction resulting in the formation of AMP, that is energically less costly than de novo synthesis. The polypeptide is Adenine phosphoribosyltransferase (Pelobacter propionicus (strain DSM 2379 / NBRC 103807 / OttBd1)).